The primary structure comprises 200 residues: Recombination protein RecR (200 aa).

A C4-type zinc finger spans residues 59–74; sequence CSTCGSLDTQDPCAIC. One can recognise a Toprim domain in the interval 82 to 177; the sequence is SLICVVEEVG…TVSMLARGVP (96 aa).

It belongs to the RecR family.

In terms of biological role, may play a role in DNA repair. It seems to be involved in an RecBC-independent recombinational process of DNA repair. It may act with RecF and RecO. This Phenylobacterium zucineum (strain HLK1) protein is Recombination protein RecR.